The following is a 275-amino-acid chain: Testis-specific gene 13 protein (275 aa).

Positions 1 to 20 are enriched in polar residues; the sequence is MSQKRQTKFQNGKSKTSENS. The interval 1-28 is disordered; it reads MSQKRQTKFQNGKSKTSENSSAKREKGM.

In terms of tissue distribution, testis-specific.

The chain is Testis-specific gene 13 protein (TSGA13) from Homo sapiens (Human).